The primary structure comprises 346 residues: Alkanal monooxygenase alpha chain (346 aa).

Heterodimer of an alpha and a beta chain.

It catalyses the reaction a long-chain fatty aldehyde + FMNH2 + O2 = a long-chain fatty acid + hnu + FMN + H2O + 2 H(+). In terms of biological role, light-emitting reaction in luminous bacteria. This is Alkanal monooxygenase alpha chain (luxA) from Photobacterium phosphoreum.